Consider the following 607-residue polypeptide: MSALLSADDLNDFISPGVACIKPLASSSTNTTTTNTTDSYNENGEVEIQIDSQGNPLEISKIDDKQFQTNKLTPAQISLADCLACSGCITSAEEVLVAQHSHQELIKALQSQKETNKVFVVSISHQSRASLAMAYNVSIENMDKCLIDLFIRQMGFTYIVGTSLGRKLSLINEAKEIINRKTKGSGTGGIDSDSSSGPILSSICPGWVLYAEKTHPYIIPKMSTVKSPQQITGCLLKNLTSNSLNIEKSKIYHLSIMPCFDKKLESARPEVYEEEEEEEEEKDKALVSVPDVDCVITAKELITLLEECPQYQLIPPTLPQEELIGGGCLSMTEIYKQYAPPNWPFIEISWSNDSGSASGGYAYNYLTIYRNDLILKGYDGNKFTINLINGRNPDIYEMRLMYNGENKEKLASAAVVNGFRNIQNLVRKLKPNTGKSTNTTTTTTKSKVNPLAARRRARIANNRGKPETKSTSEVNSQEMEIVADASKVDYVEIMACPNGCINGGGQISAPNTTTTSITLPQKEIEKQWINAVLEKYNSIPMFDLSSQSSSSSSPNEIIKFIEWSKKFENQFNISDNRLFKTHFNPVEKNIIMSVDDPATALLVGSKW.

[4Fe-4S] cluster contacts are provided by C20, C82, C85, C88, C204, and C259. A disordered region spans residues 430 to 476 (KPNTGKSTNTTTTTTKSKVNPLAARRRARIANNRGKPETKSTSEVNS). Low complexity predominate over residues 432–447 (NTGKSTNTTTTTTKSK). The [4Fe-4S] cluster site is built by C496 and C500.

The protein belongs to the NARF family.

In terms of biological role, component of the cytosolic Fe/S protein assembly machinery. Required for maturation of extramitochondrial Fe/S proteins. May play a role in the transfer of pre-assembled Fe/S clusters to target apoproteins. The protein is Cytosolic Fe-S cluster assembly factor NAR1 (NAR1) of Candida albicans (strain SC5314 / ATCC MYA-2876) (Yeast).